Consider the following 127-residue polypeptide: Alpha-hordothionin (127 aa).

The signal sequence occupies residues 1 to 18 (MVCLLILGLVLEQVQVEG). Intrachain disulfides connect Cys-21/Cys-57, Cys-22/Cys-49, Cys-30/Cys-47, and Cys-34/Cys-43. The propeptide at 64-127 (LALVSNSDEP…GDAGLTSLTA (64 aa)) is acidic domain.

The protein belongs to the plant thionin (TC 1.C.44) family. 4 C-C subfamily.

It is found in the secreted. Thionins are small plant proteins which are toxic to animal cells. They seem to exert their toxic effect at the level of the cell membrane. Their precise function is not known. The protein is Alpha-hordothionin (THI1.1) of Hordeum vulgare (Barley).